A 494-amino-acid polypeptide reads, in one-letter code: Ribose import ATP-binding protein RbsA (494 aa).

ABC transporter domains lie at 2-239 (IDMR…VGRQ) and 251-493 (IGEE…TGGN). Position 34-41 (34-41 (GENGAGKS)) interacts with ATP.

Belongs to the ABC transporter superfamily. Ribose importer (TC 3.A.1.2.1) family. As to quaternary structure, the complex is composed of an ATP-binding protein (RbsA), two transmembrane proteins (RbsC) and a solute-binding protein (RbsB).

The protein resides in the cell membrane. The catalysed reaction is D-ribose(out) + ATP + H2O = D-ribose(in) + ADP + phosphate + H(+). Its function is as follows. Part of the ABC transporter complex RbsABC involved in ribose import. Responsible for energy coupling to the transport system. The polypeptide is Ribose import ATP-binding protein RbsA (Geobacillus kaustophilus (strain HTA426)).